A 132-amino-acid chain; its full sequence is Small ribosomal subunit protein uS11 (132 aa).

This sequence belongs to the universal ribosomal protein uS11 family. Part of the 30S ribosomal subunit. Interacts with proteins S7 and S18. Binds to IF-3.

Its function is as follows. Located on the platform of the 30S subunit, it bridges several disparate RNA helices of the 16S rRNA. Forms part of the Shine-Dalgarno cleft in the 70S ribosome. This Clostridioides difficile (strain 630) (Peptoclostridium difficile) protein is Small ribosomal subunit protein uS11.